A 218-amino-acid chain; its full sequence is Peptidyl-tRNA hydrolase (218 aa).

Tyr19 lines the tRNA pocket. His24 serves as the catalytic Proton acceptor. TRNA is bound by residues Tyr68, Asn70, and Asn116. The tract at residues 181–218 is disordered; sequence WNTATQRLNARPAPPKPPKAPKAPQPAAADQPKDESQP. Over residues 192–204 the composition is skewed to pro residues; that stretch reads PAPPKPPKAPKAP.

It belongs to the PTH family. As to quaternary structure, monomer.

It localises to the cytoplasm. The enzyme catalyses an N-acyl-L-alpha-aminoacyl-tRNA + H2O = an N-acyl-L-amino acid + a tRNA + H(+). In terms of biological role, hydrolyzes ribosome-free peptidyl-tRNAs (with 1 or more amino acids incorporated), which drop off the ribosome during protein synthesis, or as a result of ribosome stalling. Functionally, catalyzes the release of premature peptidyl moieties from peptidyl-tRNA molecules trapped in stalled 50S ribosomal subunits, and thus maintains levels of free tRNAs and 50S ribosomes. The polypeptide is Peptidyl-tRNA hydrolase (Azoarcus sp. (strain BH72)).